Consider the following 283-residue polypeptide: Thymidylate synthase (283 aa).

A dUMP-binding site is contributed by arginine 22. Catalysis depends on cysteine 160, which acts as the Nucleophile. Residues 180-183 (RSCD), asparagine 191, and 221-223 (HIY) each bind dUMP. Aspartate 183 serves as a coordination point for (6R)-5,10-methylene-5,6,7,8-tetrahydrofolate. Serine 282 serves as a coordination point for (6R)-5,10-methylene-5,6,7,8-tetrahydrofolate.

This sequence belongs to the thymidylate synthase family. Bacterial-type ThyA subfamily. Homodimer.

Its subcellular location is the cytoplasm. The enzyme catalyses dUMP + (6R)-5,10-methylene-5,6,7,8-tetrahydrofolate = 7,8-dihydrofolate + dTMP. It participates in pyrimidine metabolism; dTTP biosynthesis. Catalyzes the reductive methylation of 2'-deoxyuridine-5'-monophosphate (dUMP) to 2'-deoxythymidine-5'-monophosphate (dTMP) while utilizing 5,10-methylenetetrahydrofolate (mTHF) as the methyl donor and reductant in the reaction, yielding dihydrofolate (DHF) as a by-product. This enzymatic reaction provides an intracellular de novo source of dTMP, an essential precursor for DNA biosynthesis. The polypeptide is Thymidylate synthase (Vibrio parahaemolyticus serotype O3:K6 (strain RIMD 2210633)).